The primary structure comprises 741 residues: MLKKIITALGMSGMLLASSNAIAEDTKTKNDNLSPQSVDLSPLRNLNKLDSPMDKDYNYHQAFKKLDTEQLKKDMQDLLTQSQDWWPADFGNYGPFFIRLSWHDAGTYRIYDGRGGANRGQQRFSPLNSWPDNVNLDKARQLLWPIKQKYGDAVSWSDLIVLAGTVSLESMGMKPIGFAFGREDDWQGDDTNWGLSPEEIMSSNVRDGKLAPAYAATQMGLIYVNPEGPDGKPDIKGAASEIRQAFRAMGMTDKETVALIAGGHTFGKTHGAVPEDKVKQAIGPAPDKAPIEQQGLGWHNSYGTGNGDDTMGSGLEGSWTSTPTFWNHDFLHNLYNLDWKKTLSPAGAHQWTPTNAKPENMVPDAHKLGVKHKPIMFTTDLALKEDDGFNKYTQEFYNNPEEFKEEFAKAWFKLTHRDMGPKSRYIGPWIPEQNFIWQDPVPAADYKQVSTQDIAQLEQDIINSGLTNQQLIKTAWDSASTYRKTDYRGGSNGARIALAPEKDWQMNEPAKLEVVLTKLKEIQTNFNNSKTDGTKVSLADLIVLGGNVGVEQAAKQAGYNIQMPFVPGRTDATQAQTDIESFNYLKTKSDGFINYTDGSISADKLPQTLVEKASMLDLNIPEMTVLVGGMRALDVNYDNSQEGVLTTTPGQLNNSFFVNLLDMSTQWKKSDKKDGEYIGIDRKTGKQKWTASPVDLIFGSNSELKAVAQVYAENGNEQKFVNDFAKAWHKVMMLGRFDVQQ.

Residues 1-23 form the signal peptide; that stretch reads MLKKIITALGMSGMLLASSNAIA. Residues 102 to 223 constitute a cross-link (tryptophyl-tyrosyl-methioninium (Trp-Tyr) (with M-249)); the sequence is WHDAGTYRIY…YAATQMGLIY (122 aa). The Proton acceptor role is filled by histidine 103. The tryptophyl-tyrosyl-methioninium (Tyr-Met) (with W-102) cross-link spans 223 to 249; it reads YVNPEGPDGKPDIKGAASEIRQAFRAM. Histidine 264 is a heme b binding site.

Belongs to the peroxidase family. Peroxidase/catalase subfamily. Homodimer or homotetramer. Requires heme b as cofactor. Formation of the three residue Trp-Tyr-Met cross-link is important for the catalase, but not the peroxidase activity of the enzyme.

The enzyme catalyses H2O2 + AH2 = A + 2 H2O. It carries out the reaction 2 H2O2 = O2 + 2 H2O. In terms of biological role, bifunctional enzyme with both catalase and broad-spectrum peroxidase activity. This is Catalase-peroxidase from Francisella tularensis subsp. holarctica (strain FTNF002-00 / FTA).